The chain runs to 265 residues: 3-methyl-2-oxobutanoate hydroxymethyltransferase (265 aa).

Residues Asp45 and Asp84 each contribute to the Mg(2+) site. 3-methyl-2-oxobutanoate contacts are provided by residues 45–46 (DS), Asp84, and Lys112. Glu114 serves as a coordination point for Mg(2+). The active-site Proton acceptor is the Glu181.

The protein belongs to the PanB family. Homodecamer; pentamer of dimers. The cofactor is Mg(2+).

Its subcellular location is the cytoplasm. The enzyme catalyses 3-methyl-2-oxobutanoate + (6R)-5,10-methylene-5,6,7,8-tetrahydrofolate + H2O = 2-dehydropantoate + (6S)-5,6,7,8-tetrahydrofolate. It participates in cofactor biosynthesis; (R)-pantothenate biosynthesis; (R)-pantoate from 3-methyl-2-oxobutanoate: step 1/2. In terms of biological role, catalyzes the reversible reaction in which hydroxymethyl group from 5,10-methylenetetrahydrofolate is transferred onto alpha-ketoisovalerate to form ketopantoate. The sequence is that of 3-methyl-2-oxobutanoate hydroxymethyltransferase from Yersinia pestis bv. Antiqua (strain Antiqua).